Here is a 287-residue protein sequence, read N- to C-terminus: ATP synthase gamma chain (287 aa).

The protein belongs to the ATPase gamma chain family. As to quaternary structure, F-type ATPases have 2 components, CF(1) - the catalytic core - and CF(0) - the membrane proton channel. CF(1) has five subunits: alpha(3), beta(3), gamma(1), delta(1), epsilon(1). CF(0) has three main subunits: a, b and c.

It is found in the cell inner membrane. In terms of biological role, produces ATP from ADP in the presence of a proton gradient across the membrane. The gamma chain is believed to be important in regulating ATPase activity and the flow of protons through the CF(0) complex. The sequence is that of ATP synthase gamma chain from Azotobacter vinelandii (strain DJ / ATCC BAA-1303).